Reading from the N-terminus, the 46-residue chain is Diuretic hormone (46 aa).

An Isoleucine amide modification is found at Ile46.

This sequence belongs to the sauvagine/corticotropin-releasing factor/urotensin I family.

The protein resides in the secreted. Regulation of fluid secretion. Stimulates primary urine secretion by Malpighian tubules and causes a dose-dependent stimulation of cAMP levels in the tubules. This Acheta domesticus (House cricket) protein is Diuretic hormone.